A 540-amino-acid polypeptide reads, in one-letter code: Chaperonin GroEL (540 aa).

ATP is bound by residues 29-32, 86-90, Gly-413, and Asp-493; these read TLGP and DGTTT. Positions 520 to 540 are disordered; sequence AEKPEPKPAPGPADPGAGMDF.

It belongs to the chaperonin (HSP60) family. In terms of assembly, forms a cylinder of 14 subunits composed of two heptameric rings stacked back-to-back. Interacts with the co-chaperonin GroES.

It is found in the cytoplasm. It carries out the reaction ATP + H2O + a folded polypeptide = ADP + phosphate + an unfolded polypeptide.. Its function is as follows. Together with its co-chaperonin GroES, plays an essential role in assisting protein folding. The GroEL-GroES system forms a nano-cage that allows encapsulation of the non-native substrate proteins and provides a physical environment optimized to promote and accelerate protein folding. The sequence is that of Chaperonin GroEL from Tropheryma whipplei (Whipple's bacillus).